The chain runs to 901 residues: Probable inorganic carbon transporter subunit DabA (901 aa).

Positions 424, 426, 606, and 621 each coordinate Zn(2+).

Belongs to the inorganic carbon transporter (TC 9.A.2) DabA family. Forms a complex with DabB. Zn(2+) serves as cofactor.

The protein localises to the cell membrane. In terms of biological role, part of an energy-coupled inorganic carbon pump. The protein is Probable inorganic carbon transporter subunit DabA of Staphylococcus aureus (strain Mu3 / ATCC 700698).